Here is a 281-residue protein sequence, read N- to C-terminus: MFELKDVTRRFGKKLAVDAVTLTIPQGQMVGIIGRSGAGKSTLLRMINRLQEPSSGSIHFAGVEVSGLRGRALRNWQRDCAMIFQQFNLVPRLDVLTNVMLGRLNHRSTLLSLLNIFTREERVHAIAALERLGIEQTALQPAGTLSGGQQQRVAIARALMQNPKMVLADEPIASLDPLNAKIVMDALRDINEREGITVVTNLHTLDTARNYCERIVGMAGGRVVFDGKPSDLTAEAVKEIYGTDKDGAGIDETMTSTSIDIAPERADNQSAGIQPLALAGL.

The ABC transporter domain occupies F2–K245. G34–S41 lines the ATP pocket.

This sequence belongs to the ABC transporter superfamily. Phosphonates importer (TC 3.A.1.9.1) family. In terms of assembly, the complex is composed of two ATP-binding proteins (PhnC), two transmembrane proteins (PhnE) and a solute-binding protein (PhnD).

Its subcellular location is the cell inner membrane. It carries out the reaction phosphonate(out) + ATP + H2O = phosphonate(in) + ADP + phosphate + H(+). Functionally, part of the ABC transporter complex PhnCDE involved in phosphonates import. Responsible for energy coupling to the transport system. In Rhizobium etli (strain ATCC 51251 / DSM 11541 / JCM 21823 / NBRC 15573 / CFN 42), this protein is Phosphonates import ATP-binding protein PhnC.